The chain runs to 250 residues: Uracil-DNA glycosylase (250 aa).

Asp-91 functions as the Proton acceptor in the catalytic mechanism.

This sequence belongs to the uracil-DNA glycosylase (UDG) superfamily. UNG family.

The protein localises to the host nucleus. The enzyme catalyses Hydrolyzes single-stranded DNA or mismatched double-stranded DNA and polynucleotides, releasing free uracil.. Excises uracil residues from the DNA which can arise as a result of misincorporation of dUMP residues by DNA polymerase or due to deamination of cytosine. Functionally, excises uracil residues from the DNA which can arise as a result of misincorporation of dUMP residues by DNA polymerase or deamination of cytosines. Therefore may reduce deleterious uracil incorporation into the viral genome, particularly in terminally differentiated cells which lack DNA repair enzymes. This Homo sapiens (Human) protein is Uracil-DNA glycosylase (UL114).